The primary structure comprises 963 residues: MADLAECNIKVMCRFRPLNESEVNRGDKYIAKFQGEDTVVIASKPYAFDRVFQSSTSQEQVYNDCAKKIVKDVLEGYNGTIFAYGQTSSGKTHTMEGKLHDPEGMGIIPRIVQDIFNYIYSMDENLEFHIKVSYFEIYLDKIRDLLDVSKTNLSVHEDKNRVPYVKGCTERFVCSPDEVMDTIDEGKSNRHVAVTNMNEHSSRSHSIFLINVKQENTQTEQKLSGKLYLVDLAGSEKVSKTGAEGAVLDEAKNINKSLSALGNVISALAEGSTYVPYRDSKMTRILQDSLGGNCRTTIVICCSPSSYNESETKSTLLFGQRAKTIKNTVCVNVELTAEQWKKKYEKEKEKNKILRNTIQWLENELNRWRNGETVPIDEQFDKEKANLEAFTVDKDITLTNDKPATAIGVIGNFTDAERRKCEEEIAKLYKQLDDKDEEINQQSQLVEKLKTQMLDQEELLASTRRDQDNMQAELNRLQAENDASKEEVKEVLQALEELAVNYDQKSQEVEDKTKEYELLSDELNQKSATLASIDAELQKLKEMTNHQKKRAAEMMASLLKDLAEIGIAVGNNDVKQPEGTGMIDEEFTVARLYISKMKSEVKTMVKRCKQLESTQTESNKKMEENEKELAACQLRISQHEAKIKSLTEYLQNVEQKKRQLEESVDALSEELVQLRAQEKVHEMEKEHLNKVQTANEVKQAVEQQIQSHRETHQKQISSLRDEVEAKAKLITDLQDQNQKMMLEQERLRVEHEKLKATDQEKSRKLHELTVMQDRREQARQDLKGLEETVAKELQTLHNLRKLFVQDLATRVKKSAEIDSDDTGGSAAQKQKISFLENNLEQLTKVHKQLVRDNADLRCELPKLEKRLRATAERVKALESALKEAKENASRDRKRYQQEVDRIKEAVRSKNMARRGHSAQIAKPIRPGQHPAASPTHPSAIRGGGAFVQNSQPVAVRGGGGKQV.

Residue Ala2 is modified to N-acetylalanine. Positions 8–325 constitute a Kinesin motor domain; that stretch reads NIKVMCRFRP…LLFGQRAKTI (318 aa). 85–92 contributes to the ATP binding site; the sequence is GQTSSGKT. A Glycyl lysine isopeptide (Lys-Gly) (interchain with G-Cter in SUMO2) cross-link involves residue Lys213. Residues 329–914 are a coiled coil; it reads VCVNVELTAE…AVRSKNMARR (586 aa). The tract at residues 908 to 963 is disordered; that stretch reads SKNMARRGHSAQIAKPIRPGQHPAASPTHPSAIRGGGAFVQNSQPVAVRGGGGKQV. A globular region spans residues 915–963; sequence GHSAQIAKPIRPGQHPAASPTHPSAIRGGGAFVQNSQPVAVRGGGGKQV. Ser933 carries the phosphoserine modification. Residue Arg956 is modified to Omega-N-methylarginine.

Belongs to the TRAFAC class myosin-kinesin ATPase superfamily. Kinesin family. Kinesin subfamily. In terms of assembly, oligomer composed of two heavy chains and two light chains. Interacts with GRIP1 and PPP1R42. Interacts with SYBU. Interacts with JAKMIP1. Interacts with PLEKHM2. Interacts with ECPAS. Interacts with ZFYVE27. Found in a complex with OGT, RHOT1, RHOT2 and TRAK1. Interacts with APP (via cytoplasmic domain).

It is found in the cytoplasm. The protein resides in the cytoskeleton. Its subcellular location is the cytolytic granule membrane. It localises to the lysosome membrane. Functionally, microtubule-dependent motor required for normal distribution of mitochondria and lysosomes. Can induce formation of neurite-like membrane protrusions in non-neuronal cells in a ZFYVE27-dependent manner. Regulates centrosome and nuclear positioning during mitotic entry. During the G2 phase of the cell cycle in a BICD2-dependent manner, antagonizes dynein function and drives the separation of nuclei and centrosomes. Required for anterograde axonal transportation of MAPK8IP3/JIP3 which is essential for MAPK8IP3/JIP3 function in axon elongation. Through binding with PLEKHM2 and ARL8B, directs lysosome movement toward microtubule plus ends. Involved in NK cell-mediated cytotoxicity. Drives the polarization of cytolytic granules and microtubule-organizing centers (MTOCs) toward the immune synapse between effector NK lymphocytes and target cells. The protein is Kinesin-1 heavy chain of Homo sapiens (Human).